A 453-amino-acid polypeptide reads, in one-letter code: Ubiquitin-associated protein 1 (453 aa).

The 47-residue stretch at 19 to 65 folds into the UMA domain; it reads LDDVPFKLNEKFRCPSKVGLPIGFCLSDCNAILSDLQYDFNLERRTV. Over residues 83 to 93 the composition is skewed to basic and acidic residues; sequence EAIRTDSESER. Disordered regions lie at residues 83–119, 189–223, and 260–335; these read EAIR…QDIV, LQSQ…AKTG, and FPKL…AGTT. A compositionally biased stretch (low complexity) spans 189–199; that stretch reads LQSQPQSSVSP. Residues 285 to 328 show a composition bias toward polar residues; that stretch reads NLSNGTPPSLQRTASNNNTTLPQEQPVFAQNGTPKQSNPVTVTS. UBA domains lie at 340-381 and 403-449; these read SPSE…LFTH and GSEE…LMTR.

As to quaternary structure, component of an ESCRT-I complex (endosomal sorting complex required for transport I).

The protein localises to the cytoplasm. It localises to the cytosol. The protein resides in the endosome. Component of the ESCRT-I complex, a regulator of vesicular trafficking process. Binds to ubiquitinated cargo proteins and is required for the sorting of endocytic ubiquitinated cargos into multivesicular bodies (MVBs). The polypeptide is Ubiquitin-associated protein 1 (Danio rerio (Zebrafish)).